A 357-amino-acid chain; its full sequence is Protein Wnt-5b (357 aa).

The signal sequence occupies residues 1–18; that stretch reads MPGIRLLLAAALLCCPPP. A disulfide bond links Cys81 and Cys92. Asn91 and Asn97 each carry an N-linked (GlcNAc...) asparagine glycan. 10 disulfide bridges follow: Cys131/Cys139, Cys141/Cys159, Cys215/Cys229, Cys217/Cys224, Cys286/Cys317, Cys302/Cys312, Cys316/Cys356, Cys332/Cys347, Cys334/Cys344, and Cys339/Cys340. Ser221 carries the O-palmitoleoyl serine; by PORCN lipid modification. N-linked (GlcNAc...) asparagine glycosylation is found at Asn289 and Asn303.

This sequence belongs to the Wnt family. Post-translationally, palmitoleoylation is required for efficient binding to frizzled receptors. Depalmitoleoylation leads to Wnt signaling pathway inhibition. In terms of tissue distribution, predominantly in neuroectodermal tissues.

It localises to the secreted. The protein localises to the extracellular space. It is found in the extracellular matrix. In terms of biological role, ligand for members of the frizzled family of seven transmembrane receptors. Probable developmental protein. May be a signaling molecule which affects the development of discrete regions of tissues. Is likely to signal over only few cell diameters. The protein is Protein Wnt-5b (WNT-5B) of Ambystoma mexicanum (Axolotl).